Here is a 726-residue protein sequence, read N- to C-terminus: Catalase-peroxidase (726 aa).

A compositionally biased stretch (polar residues) spans 1 to 12; it reads MSTPSDQHNTLS. A disordered region spans residues 1–34; it reads MSTPSDQHNTLSAGKCPFHQGNSNQTAGGGTSSR. Residues 105-226 constitute a cross-link (tryptophyl-tyrosyl-methioninium (Trp-Tyr) (with M-252)); that stretch reads WHSAGTYRSA…LGATEMGLIY (122 aa). The active-site Proton acceptor is histidine 106. The tryptophyl-tyrosyl-methioninium (Tyr-Met) (with W-105) cross-link spans 226 to 252; it reads YVNPEGPNHSGDPASAAPAIRATFGNM. Position 267 (histidine 267) interacts with heme b.

It belongs to the peroxidase family. Peroxidase/catalase subfamily. In terms of assembly, homodimer or homotetramer. The cofactor is heme b. Formation of the three residue Trp-Tyr-Met cross-link is important for the catalase, but not the peroxidase activity of the enzyme.

It catalyses the reaction H2O2 + AH2 = A + 2 H2O. It carries out the reaction 2 H2O2 = O2 + 2 H2O. Its function is as follows. Bifunctional enzyme with both catalase and broad-spectrum peroxidase activity. The polypeptide is Catalase-peroxidase (Cronobacter sakazakii (strain ATCC BAA-894) (Enterobacter sakazakii)).